Here is a 231-residue protein sequence, read N- to C-terminus: Enolase-phosphatase E1 (231 aa).

It belongs to the HAD-like hydrolase superfamily. MasA/MtnC family. Monomer. Mg(2+) serves as cofactor.

It catalyses the reaction 5-methylsulfanyl-2,3-dioxopentyl phosphate + H2O = 1,2-dihydroxy-5-(methylsulfanyl)pent-1-en-3-one + phosphate. The protein operates within amino-acid biosynthesis; L-methionine biosynthesis via salvage pathway; L-methionine from S-methyl-5-thio-alpha-D-ribose 1-phosphate: step 3/6. It functions in the pathway amino-acid biosynthesis; L-methionine biosynthesis via salvage pathway; L-methionine from S-methyl-5-thio-alpha-D-ribose 1-phosphate: step 4/6. Its function is as follows. Bifunctional enzyme that catalyzes the enolization of 2,3-diketo-5-methylthiopentyl-1-phosphate (DK-MTP-1-P) into the intermediate 2-hydroxy-3-keto-5-methylthiopentenyl-1-phosphate (HK-MTPenyl-1-P), which is then dephosphorylated to form the acireductone 1,2-dihydroxy-3-keto-5-methylthiopentene (DHK-MTPene). The sequence is that of Enolase-phosphatase E1 from Granulibacter bethesdensis (strain ATCC BAA-1260 / CGDNIH1).